Here is a 106-residue protein sequence, read N- to C-terminus: Large ribosomal subunit protein uL23 (106 aa).

It belongs to the universal ribosomal protein uL23 family. As to quaternary structure, part of the 50S ribosomal subunit. Contacts protein L29, and trigger factor when it is bound to the ribosome.

Its function is as follows. One of the early assembly proteins it binds 23S rRNA. One of the proteins that surrounds the polypeptide exit tunnel on the outside of the ribosome. Forms the main docking site for trigger factor binding to the ribosome. The protein is Large ribosomal subunit protein uL23 of Neisseria meningitidis serogroup C / serotype 2a (strain ATCC 700532 / DSM 15464 / FAM18).